The following is a 203-amino-acid chain: Urease accessory protein UreG (203 aa).

GTP is bound at residue Gly-13–Thr-20.

The protein belongs to the SIMIBI class G3E GTPase family. UreG subfamily. As to quaternary structure, homodimer. UreD, UreF and UreG form a complex that acts as a GTP-hydrolysis-dependent molecular chaperone, activating the urease apoprotein by helping to assemble the nickel containing metallocenter of UreC. The UreE protein probably delivers the nickel.

It localises to the cytoplasm. In terms of biological role, facilitates the functional incorporation of the urease nickel metallocenter. This process requires GTP hydrolysis, probably effectuated by UreG. The polypeptide is Urease accessory protein UreG (Methylobacillus flagellatus (strain ATCC 51484 / DSM 6875 / VKM B-1610 / KT)).